An 85-amino-acid polypeptide reads, in one-letter code: Beta-defensin 18 (85 aa).

The first 23 residues, 1 to 23 (MQSTMKMFGIILMVIFSVSCGPS), serve as a signal peptide directing secretion. Disulfide bonds link cysteine 39/cysteine 65, cysteine 46/cysteine 60, and cysteine 50/cysteine 66.

The protein belongs to the beta-defensin family.

It localises to the secreted. Functionally, has antibacterial activity. The polypeptide is Beta-defensin 18 (Defb18) (Mus musculus (Mouse)).